The sequence spans 215 residues: UPF0502 protein YceH (215 aa).

Lys80 is subject to N6-acetyllysine.

It belongs to the UPF0502 family.

The polypeptide is UPF0502 protein YceH (Escherichia coli O45:K1 (strain S88 / ExPEC)).